A 261-amino-acid polypeptide reads, in one-letter code: MLGLKIEDAIKYNEKLKKYVYKKGDKLRINFKDKEALIEYNKTVLKVLFDLDIEFHKNGLIPTPINRYLFIKSTFETLKELGIEKPTVLEIGTGHSAIISLLIKKFYNAEVYATEVDEEFIDFAKRNIEKNKLDIKIINSKGRAIEGIEELKDKKFDLIISYPPFYSKNSVASGRKFGGALAKNVELIGGGKFGEEFSFKIIEEGINFLNKKGVISLMMPKKPEKRRELIIKKMKEVGLDVEVDEIKTGNRLRYIIKGIKG.

This sequence belongs to the methyltransferase superfamily.

This is Putative methyltransferase MJ0046 from Methanocaldococcus jannaschii (strain ATCC 43067 / DSM 2661 / JAL-1 / JCM 10045 / NBRC 100440) (Methanococcus jannaschii).